Here is a 286-residue protein sequence, read N- to C-terminus: 4-hydroxybenzoate octaprenyltransferase (286 aa).

7 helical membrane-spanning segments follow: residues 21–40, 95–115, 142–162, 167–187, 210–230, 235–255, and 266–286; these read GTLLLLWPCLMALMLAAGGM, ILFVILGLSAFGLVLLLNGLV, FLGIVWSWSIPMAYAAQTGEV, WWLFAANWCWTVAYDTMYAMV, QIIGLFQLAALACFIAAGWSA, LYGLGILTFVGFSTYQQMLIF, and FLNNNWAGLALFVGLGADYLI.

This sequence belongs to the UbiA prenyltransferase family. Mg(2+) serves as cofactor.

It is found in the cell inner membrane. The catalysed reaction is all-trans-octaprenyl diphosphate + 4-hydroxybenzoate = 4-hydroxy-3-(all-trans-octaprenyl)benzoate + diphosphate. It functions in the pathway cofactor biosynthesis; ubiquinone biosynthesis. Functionally, catalyzes the prenylation of para-hydroxybenzoate (PHB) with an all-trans polyprenyl group. Mediates the second step in the final reaction sequence of ubiquinone-8 (UQ-8) biosynthesis, which is the condensation of the polyisoprenoid side chain with PHB, generating the first membrane-bound Q intermediate 3-octaprenyl-4-hydroxybenzoate. In Shewanella baltica (strain OS155 / ATCC BAA-1091), this protein is 4-hydroxybenzoate octaprenyltransferase.